A 198-amino-acid polypeptide reads, in one-letter code: Ribonuclease HII (198 aa).

Positions 10-198 constitute an RNase H type-2 domain; it reads QLVAGVDEVG…PVKRALGLAS (189 aa). Residues Asp16, Glu17, and Asp108 each contribute to the a divalent metal cation site.

The protein belongs to the RNase HII family. It depends on Mn(2+) as a cofactor. Mg(2+) serves as cofactor.

Its subcellular location is the cytoplasm. It carries out the reaction Endonucleolytic cleavage to 5'-phosphomonoester.. Functionally, endonuclease that specifically degrades the RNA of RNA-DNA hybrids. The protein is Ribonuclease HII of Citrobacter koseri (strain ATCC BAA-895 / CDC 4225-83 / SGSC4696).